The following is a 114-amino-acid chain: Iron-sulfur cluster insertion protein ErpA (114 aa).

Iron-sulfur cluster is bound by residues C42, C106, and C108.

The protein belongs to the HesB/IscA family. In terms of assembly, homodimer. The cofactor is iron-sulfur cluster.

Required for insertion of 4Fe-4S clusters for at least IspG. This is Iron-sulfur cluster insertion protein ErpA from Shigella boydii serotype 18 (strain CDC 3083-94 / BS512).